The chain runs to 510 residues: Sucrose transport protein SUC4 (510 aa).

Residues 1 to 34 are disordered; sequence MATSDQDRRHRVTRNRPPIARPSTSSSRPVVSPP. Topologically, residues 1–45 are cytoplasmic; sequence MATSDQDRRHRVTRNRPPIARPSTSSSRPVVSPPRSKVSKRVLLR. Low complexity predominate over residues 21–34; it reads RPSTSSSRPVVSPP. Phosphoserine is present on S23. Residues 46-66 traverse the membrane as a helical segment; that stretch reads VASVACGIQFGWALQLSLLTP. Over 67 to 71 the chain is Extracellular; that stretch reads YVQEL. A helical transmembrane segment spans residues 72 to 92; it reads GIPHAWASVIWLCGPLSGLFV. Topologically, residues 93–111 are cytoplasmic; sequence QPLVGHSSDRCTSKYGRRR. A helical transmembrane segment spans residues 112-132; the sequence is PFIVAGAVAISISVMVIGHAA. At 133–148 the chain is on the extracellular side; it reads DIGWAFGDREGKIKPR. Residues 149-169 traverse the membrane as a helical segment; sequence AIVAFVLGFWILDVANNMTQG. At 170–187 the chain is on the cytoplasmic side; sequence PCRALLADLTENDNRRTR. Residues 188-208 form a helical membrane-spanning segment; that stretch reads VANGYFSLFMAVGNVLGYATG. Topologically, residues 209–233 are extracellular; that stretch reads SYNGWYKIFTFTKTVACNVECANLK. Residues 234-254 traverse the membrane as a helical segment; sequence SAFYIDVVFIAITTILSVSAA. The Cytoplasmic segment spans residues 255-291; that stretch reads HEVPLASLASEAHGQTSGTDEAFLSEIFGTFRYFPGN. A helical transmembrane segment spans residues 292–312; that stretch reads VWIILLVTALTWIGWFPFILF. Topologically, residues 313–335 are extracellular; the sequence is DTDWMGREIYGGEPNIGTSYSAG. Residues 336–356 traverse the membrane as a helical segment; it reads VSMGALGLMLNSVFLGITSVL. Residues 357–365 lie on the Cytoplasmic side of the membrane; sequence MEKLCRKWG. A helical transmembrane segment spans residues 366 to 386; the sequence is AGFVWGISNILMAICFLGMII. The Extracellular portion of the chain corresponds to 387-402; it reads TSFVASHLGYIGHEQP. Residues 403 to 423 form a helical membrane-spanning segment; sequence PASIVFAAVLIFTILGIPLAI. The Cytoplasmic segment spans residues 424–443; sequence TYSVPYALISIRIESLGLGQ. A helical transmembrane segment spans residues 444–464; it reads GLSLGVLNLAIVIPQVIVSVG. Residues 465 to 477 are Extracellular-facing; that stretch reads SGPWDQLFGGGNS. A helical membrane pass occupies residues 478-498; that stretch reads PALAVGAATGFIGGIVAILAL. Residues 499–510 are Cytoplasmic-facing; that stretch reads PRTRIQKPIPLP.

This sequence belongs to the glycoside-pentoside-hexuronide (GPH) cation symporter transporter (TC 2.A.2.4) family. In terms of assembly, homodimer. Interacts with SUC2 and SUC3. As to expression, expressed in sink tissues, mostly in minor veins of sink leaves. Localized in companion cells.

It localises to the cell membrane. The catalysed reaction is sucrose(out) + H(+)(out) = sucrose(in) + H(+)(in). It functions in the pathway glycan biosynthesis; sucrose metabolism. Functionally, responsible for the transport of sucrose into the cell, with the concomitant uptake of protons (symport system). Can also transport maltose at a lesser rate. May also transport biotin. The chain is Sucrose transport protein SUC4 from Arabidopsis thaliana (Mouse-ear cress).